The sequence spans 396 residues: Ribosomal RNA large subunit methyltransferase I (396 aa).

The PUA domain occupies 2 to 79; sequence SVFIYLVKGR…KEETVDLDFF (78 aa).

This sequence belongs to the methyltransferase superfamily. RlmI family.

Its subcellular location is the cytoplasm. The catalysed reaction is cytidine(1962) in 23S rRNA + S-adenosyl-L-methionine = 5-methylcytidine(1962) in 23S rRNA + S-adenosyl-L-homocysteine + H(+). Functionally, specifically methylates the cytosine at position 1962 (m5C1962) of 23S rRNA. This is Ribosomal RNA large subunit methyltransferase I from Aeromonas salmonicida (strain A449).